Here is a 220-residue protein sequence, read N- to C-terminus: GTP cyclohydrolase 1 (220 aa).

C109, H112, and C180 together coordinate Zn(2+).

Belongs to the GTP cyclohydrolase I family. Toroid-shaped homodecamer, composed of two pentamers of five dimers.

The enzyme catalyses GTP + H2O = 7,8-dihydroneopterin 3'-triphosphate + formate + H(+). It participates in cofactor biosynthesis; 7,8-dihydroneopterin triphosphate biosynthesis; 7,8-dihydroneopterin triphosphate from GTP: step 1/1. The protein is GTP cyclohydrolase 1 of Yersinia enterocolitica serotype O:8 / biotype 1B (strain NCTC 13174 / 8081).